A 487-amino-acid polypeptide reads, in one-letter code: Cysteine--tRNA ligase (487 aa).

C27 is a binding site for Zn(2+). The short motif at 29–39 is the 'HIGH' region element; the sequence is VTVYDLCHIGH. The Zn(2+) site is built by C211, H236, and E240. The 'KMSKS' region signature appears at 268–272; it reads KMSKS. K271 lines the ATP pocket.

The protein belongs to the class-I aminoacyl-tRNA synthetase family. In terms of assembly, monomer. Zn(2+) is required as a cofactor.

It is found in the cytoplasm. It carries out the reaction tRNA(Cys) + L-cysteine + ATP = L-cysteinyl-tRNA(Cys) + AMP + diphosphate. This is Cysteine--tRNA ligase from Thermodesulfovibrio yellowstonii (strain ATCC 51303 / DSM 11347 / YP87).